The primary structure comprises 188 residues: Elongation factor P (188 aa).

The protein belongs to the elongation factor P family.

It is found in the cytoplasm. It participates in protein biosynthesis; polypeptide chain elongation. Involved in peptide bond synthesis. Stimulates efficient translation and peptide-bond synthesis on native or reconstituted 70S ribosomes in vitro. Probably functions indirectly by altering the affinity of the ribosome for aminoacyl-tRNA, thus increasing their reactivity as acceptors for peptidyl transferase. The chain is Elongation factor P from Cellvibrio japonicus (strain Ueda107) (Pseudomonas fluorescens subsp. cellulosa).